The sequence spans 3095 residues: HD protein homolog (3095 aa).

Disordered stretches follow at residues 105 to 197 (PHQH…NGNA), 536 to 561 (QQQQ…TMSG), 1312 to 1371 (PPQQ…STVI), 1509 to 1547 (KSTS…TTPS), and 2005 to 2037 (KELT…KEEE). Polar residues predominate over residues 115–139 (STNLTDHLSQNSVTPSVPTTPNYQQ). Composition is skewed to low complexity over residues 140–197 (SPST…NGNA) and 536–551 (QQQQ…QQQQ). Over residues 552–561 (HNLTSSTMSG) the composition is skewed to polar residues. Low complexity-rich tracts occupy residues 1315 to 1368 (QQQQ…LNNS), 1510 to 1547 (STSS…TTPS), and 2008 to 2018 (TNNNNNNNNNI).

Belongs to the huntingtin family.

Its subcellular location is the cytoplasm. The protein localises to the nucleus. Functionally, may play a role in microtubule-mediated transport or vesicle function. The sequence is that of HD protein homolog (htt) from Dictyostelium discoideum (Social amoeba).